The primary structure comprises 445 residues: C-terminal-binding protein 2 (445 aa).

An Asymmetric dimethylarginine modification is found at Arg-22. Residues Ser-106, 186 to 191 (IGFGRT), Asp-210, 243 to 249 (CNLNEHN), 270 to 272 (AAR), and Asp-296 contribute to the NAD(+) site. The active site involves Arg-272. Residue Glu-301 is part of the active site. His-321 acts as the Proton donor in catalysis. 321 to 324 (HTAW) lines the NAD(+) pocket. The interval 414–445 (THNLPTVAHPSQAPSPNQPTKHGDNREHPNEQ) is disordered. Position 428 is a phosphoserine (Ser-428). Over residues 434 to 445 (KHGDNREHPNEQ) the composition is skewed to basic and acidic residues.

Belongs to the D-isomer specific 2-hydroxyacid dehydrogenase family. Can form homodimers or heterodimers of CTBP1 and CTBP2. Interacts with HIPK2 and ZNF217. Interacts with PRDM16; represses white adipose tissue (WAT)-specific genes expression. Interacts with PNN, NRIP1 and WIZ. Interacts with MCRIP1. In terms of assembly, (Microbial infection) Interacts with human adenovirus 5 E1A protein; this interaction seems to potentiate viral replication. In terms of tissue distribution, ubiquitous. Highest levels in heart, skeletal muscle, and pancreas.

Its subcellular location is the nucleus. The protein localises to the synapse. Corepressor targeting diverse transcription regulators. Functions in brown adipose tissue (BAT) differentiation. In terms of biological role, isoform 2 probably acts as a scaffold for specialized synapses. The polypeptide is C-terminal-binding protein 2 (CTBP2) (Homo sapiens (Human)).